The chain runs to 120 residues: Chaperonin GroEL (120 aa).

23 to 27 is a binding site for ATP; that stretch reads DGTTT.

It belongs to the chaperonin (HSP60) family. In terms of assembly, forms a cylinder of 14 subunits composed of two heptameric rings stacked back-to-back. Interacts with the co-chaperonin GroES.

The protein resides in the cytoplasm. It carries out the reaction ATP + H2O + a folded polypeptide = ADP + phosphate + an unfolded polypeptide.. In terms of biological role, together with its co-chaperonin GroES, plays an essential role in assisting protein folding. The GroEL-GroES system forms a nano-cage that allows encapsulation of the non-native substrate proteins and provides a physical environment optimized to promote and accelerate protein folding. The chain is Chaperonin GroEL from Mycolicibacterium rhodesiae (Mycobacterium rhodesiae).